Reading from the N-terminus, the 123-residue chain is Large ribosomal subunit protein bL12 (123 aa).

Belongs to the bacterial ribosomal protein bL12 family. As to quaternary structure, homodimer. Part of the ribosomal stalk of the 50S ribosomal subunit. Forms a multimeric L10(L12)X complex, where L10 forms an elongated spine to which 2 to 4 L12 dimers bind in a sequential fashion. Binds GTP-bound translation factors.

Functionally, forms part of the ribosomal stalk which helps the ribosome interact with GTP-bound translation factors. Is thus essential for accurate translation. This is Large ribosomal subunit protein bL12 from Wigglesworthia glossinidia brevipalpis.